The primary structure comprises 270 residues: Phosphatidylglycerol--prolipoprotein diacylglyceryl transferase (270 aa).

The next 4 membrane-spanning stretches (helical) occupy residues Phe19–Ala39, Leu56–Glu76, Gln92–Ala112, and Gly116–Ile136. Arg138 contacts a 1,2-diacyl-sn-glycero-3-phospho-(1'-sn-glycerol). The next 3 membrane-spanning stretches (helical) occupy residues His178–Leu198, Gly206–Leu226, and Leu236–Val256.

Belongs to the Lgt family.

It is found in the cell membrane. It catalyses the reaction L-cysteinyl-[prolipoprotein] + a 1,2-diacyl-sn-glycero-3-phospho-(1'-sn-glycerol) = an S-1,2-diacyl-sn-glyceryl-L-cysteinyl-[prolipoprotein] + sn-glycerol 1-phosphate + H(+). The protein operates within protein modification; lipoprotein biosynthesis (diacylglyceryl transfer). Catalyzes the transfer of the diacylglyceryl group from phosphatidylglycerol to the sulfhydryl group of the N-terminal cysteine of a prolipoprotein, the first step in the formation of mature lipoproteins. In Bacillus cereus (strain G9842), this protein is Phosphatidylglycerol--prolipoprotein diacylglyceryl transferase.